Here is a 116-residue protein sequence, read N- to C-terminus: Large ribosomal subunit protein uL18 (116 aa).

Belongs to the universal ribosomal protein uL18 family. As to quaternary structure, part of the 50S ribosomal subunit; part of the 5S rRNA/L5/L18/L25 subcomplex. Contacts the 5S and 23S rRNAs.

In terms of biological role, this is one of the proteins that bind and probably mediate the attachment of the 5S RNA into the large ribosomal subunit, where it forms part of the central protuberance. The sequence is that of Large ribosomal subunit protein uL18 from Shewanella amazonensis (strain ATCC BAA-1098 / SB2B).